Consider the following 495-residue polypeptide: tRNA modification GTPase MnmE (495 aa).

Residues R28, E89, and K128 each coordinate (6S)-5-formyl-5,6,7,8-tetrahydrofolate. One can recognise a TrmE-type G domain in the interval 223–417 (GVRIVLGGCP…LRAQTLHLLH (195 aa)). Position 233 (N233) interacts with K(+). Residues 233-238 (NAGKSS), 252-258 (SSVPGTT), and 277-280 (DTAG) contribute to the GTP site. A Mg(2+)-binding site is contributed by S237. S252, V254, and T257 together coordinate K(+). T258 is a binding site for Mg(2+). Residue K495 coordinates (6S)-5-formyl-5,6,7,8-tetrahydrofolate.

The protein belongs to the TRAFAC class TrmE-Era-EngA-EngB-Septin-like GTPase superfamily. TrmE GTPase family. In terms of assembly, homodimer. Heterotetramer of two MnmE and two MnmG subunits. Requires K(+) as cofactor.

Its subcellular location is the cytoplasm. In terms of biological role, exhibits a very high intrinsic GTPase hydrolysis rate. Involved in the addition of a carboxymethylaminomethyl (cmnm) group at the wobble position (U34) of certain tRNAs, forming tRNA-cmnm(5)s(2)U34. In Treponema pallidum (strain Nichols), this protein is tRNA modification GTPase MnmE.